The sequence spans 139 residues: Large ribosomal subunit protein uL16 (139 aa).

It belongs to the universal ribosomal protein uL16 family. Part of the 50S ribosomal subunit.

Its function is as follows. Binds 23S rRNA and is also seen to make contacts with the A and possibly P site tRNAs. The chain is Large ribosomal subunit protein uL16 from Chlorobium phaeobacteroides (strain DSM 266 / SMG 266 / 2430).